We begin with the raw amino-acid sequence, 231 residues long: Orotidine 5'-phosphate decarboxylase (231 aa).

Residues Asp-11, Lys-33, 60 to 69 (DLKFHDIPNT), Thr-120, Arg-181, Gln-190, Gly-210, and Arg-211 each bind substrate. The active-site Proton donor is Lys-62.

Belongs to the OMP decarboxylase family. Type 1 subfamily. As to quaternary structure, homodimer.

The enzyme catalyses orotidine 5'-phosphate + H(+) = UMP + CO2. The protein operates within pyrimidine metabolism; UMP biosynthesis via de novo pathway; UMP from orotate: step 2/2. In terms of biological role, catalyzes the decarboxylation of orotidine 5'-monophosphate (OMP) to uridine 5'-monophosphate (UMP). In Vibrio cholerae serotype O1 (strain ATCC 39315 / El Tor Inaba N16961), this protein is Orotidine 5'-phosphate decarboxylase.